Consider the following 546-residue polypeptide: Zinc metalloproteinase nas-9 (546 aa).

An N-terminal signal peptide occupies residues methionine 1–alanine 14. Residues glutamine 15 to arginine 300 constitute a propeptide that is removed on maturation. Asparagine 248 carries N-linked (GlcNAc...) asparagine glycosylation. One can recognise a Peptidase M12A domain in the interval serine 308–arginine 507. Disulfide bonds link cysteine 347-cysteine 506, cysteine 372-cysteine 392, cysteine 510-cysteine 546, cysteine 517-cysteine 539, and cysteine 526-cysteine 543. A Zn(2+)-binding site is contributed by histidine 401. The active site involves glutamate 402. Residues histidine 405 and histidine 411 each contribute to the Zn(2+) site. The ShKT domain maps to cysteine 510–cysteine 546.

The cofactor is Zn(2+). Expressed in hypodermis, uterus and spermatheca.

It is found in the secreted. Metalloprotease. This is Zinc metalloproteinase nas-9 (nas-9) from Caenorhabditis elegans.